Consider the following 373-residue polypeptide: L-threonine 3-dehydrogenase, mitochondrial (373 aa).

Residues glycine 62–leucine 67, aspartate 88–arginine 90, aspartate 106–isoleucine 107, tyrosine 195, lysine 199, and isoleucine 225 each bind NAD(+). The active-site Proton donor/acceptor is the tyrosine 195.

The protein belongs to the NAD(P)-dependent epimerase/dehydratase family. In terms of assembly, homodimer.

The protein resides in the mitochondrion. It carries out the reaction L-threonine + NAD(+) = (2S)-2-amino-3-oxobutanoate + NADH + H(+). It functions in the pathway amino-acid degradation; L-threonine degradation via oxydo-reductase pathway; glycine from L-threonine: step 1/2. Catalyzes the NAD(+)-dependent oxidation of L-threonine to 2-amino-3-ketobutyrate, mediating L-threonine catabolism. The protein is L-threonine 3-dehydrogenase, mitochondrial of Sus scrofa (Pig).